The following is a 476-amino-acid chain: TOM1-like protein 1 (476 aa).

The VHS domain maps to 22-154 (ATFAGVQTED…DLVKKGVQFP (133 aa)). The disordered stretch occupies residues 155 to 179 (PSEAEAETARQETAQISSNPPTSVP). The segment covering 170–179 (ISSNPPTSVP) has biased composition (polar residues). S171 is modified (phosphoserine). The region spanning 200 to 288 (EQIGKLHSEL…AILGYERFTR (89 aa)) is the GAT domain. Residues 298 to 314 (KNQKEATNTTSEPSAPS) show a composition bias toward polar residues. Residues 298-327 (KNQKEATNTTSEPSAPSQDLLDLSPSPRMP) form a disordered region. 3 positions are modified to phosphoserine: S314, S321, and S323. The interaction with GRB2 stretch occupies residues 392 to 395 (YDNF). The short motif at 421 to 425 (LPPLP) is the SH3-binding element. The interaction with PIK3R1 stretch occupies residues 442–445 (YEVM). Y460 carries the post-translational modification Phosphotyrosine. The short motif at 460–463 (YEEI) is the SH2-binding element.

It belongs to the TOM1 family. As to quaternary structure, interacts with FYN, GRB2 and PIK3R1 when phosphorylated. Interacts with LYN. In terms of processing, phosphorylated on tyrosines by FYN and LYN.

The protein resides in the golgi apparatus. The protein localises to the golgi stack. It is found in the endosome membrane. It localises to the cytoplasm. Its subcellular location is the membrane. Its function is as follows. Probable adapter protein involved in signaling pathways. Interacts with the SH2 and SH3 domains of various signaling proteins when it is phosphorylated. May promote FYN activation, possibly by disrupting intramolecular SH3-dependent interactions. This is TOM1-like protein 1 (TOM1L1) from Homo sapiens (Human).